Consider the following 79-residue polypeptide: Morintide mO2 (79 aa).

The signal sequence occupies residues M1–A20. A Chitin-binding type-1 domain is found at Q21–G63. Intrachain disulfides connect C23–C38, C32–C44, C37–C51, and C57–C61. A propeptide spanning residues G64 to P79 is cleaved from the precursor.

In terms of tissue distribution, leaves (at protein level).

In terms of biological role, chitin-binding protein which functions in defense against chitin-containing fungal pathogens. The protein is Morintide mO2 of Moringa oleifera (Horseradish tree).